The sequence spans 478 residues: Sugar transporter ERD6-like 15 (478 aa).

12 consecutive transmembrane segments (helical) span residues 31-51 (FVLA…IIGY), 67-87 (IADY…GALI), 106-126 (ILFV…LLDL), 129-149 (LLQG…ITEI), 161-181 (FAQL…TIVA), 185-205 (LAIL…FIPE), 267-287 (AFSL…GLNG), 305-325 (FGFI…TVLV), 333-353 (LLLV…ISFF), 366-386 (VLAL…MGSI), 406-426 (MCNL…SYLL), and 432-452 (GTFL…AKLV).

Belongs to the major facilitator superfamily. Sugar transporter (TC 2.A.1.1) family.

It localises to the membrane. Functionally, sugar transporter. The polypeptide is Sugar transporter ERD6-like 15 (Arabidopsis thaliana (Mouse-ear cress)).